The following is a 120-amino-acid chain: Large ribosomal subunit protein uL18 (120 aa).

It belongs to the universal ribosomal protein uL18 family. Part of the 50S ribosomal subunit; part of the 5S rRNA/L5/L18/L25 subcomplex. Contacts the 5S and 23S rRNAs.

This is one of the proteins that bind and probably mediate the attachment of the 5S RNA into the large ribosomal subunit, where it forms part of the central protuberance. The chain is Large ribosomal subunit protein uL18 from Maricaulis maris (strain MCS10) (Caulobacter maris).